The following is a 122-amino-acid chain: Small ribosomal subunit protein uS13 (122 aa).

The tract at residues 97 to 122 (PVRGQRTKTNARTRKGPARTVAGKKK) is disordered.

It belongs to the universal ribosomal protein uS13 family. As to quaternary structure, part of the 30S ribosomal subunit. Forms a loose heterodimer with protein S19. Forms two bridges to the 50S subunit in the 70S ribosome.

Located at the top of the head of the 30S subunit, it contacts several helices of the 16S rRNA. In the 70S ribosome it contacts the 23S rRNA (bridge B1a) and protein L5 of the 50S subunit (bridge B1b), connecting the 2 subunits; these bridges are implicated in subunit movement. Contacts the tRNAs in the A and P-sites. In Geobacter sulfurreducens (strain ATCC 51573 / DSM 12127 / PCA), this protein is Small ribosomal subunit protein uS13.